A 635-amino-acid polypeptide reads, in one-letter code: 1-deoxy-D-xylulose-5-phosphate synthase (635 aa).

Residues His79 and 120–122 contribute to the thiamine diphosphate site; that span reads GHS. Asp151 is a binding site for Mg(2+). Thiamine diphosphate is bound by residues 152–153, Asn182, Tyr290, and Glu372; that span reads GA. Residue Asn182 participates in Mg(2+) binding.

This sequence belongs to the transketolase family. DXPS subfamily. Homodimer. The cofactor is Mg(2+). Thiamine diphosphate serves as cofactor.

It carries out the reaction D-glyceraldehyde 3-phosphate + pyruvate + H(+) = 1-deoxy-D-xylulose 5-phosphate + CO2. Its pathway is metabolic intermediate biosynthesis; 1-deoxy-D-xylulose 5-phosphate biosynthesis; 1-deoxy-D-xylulose 5-phosphate from D-glyceraldehyde 3-phosphate and pyruvate: step 1/1. Catalyzes the acyloin condensation reaction between C atoms 2 and 3 of pyruvate and glyceraldehyde 3-phosphate to yield 1-deoxy-D-xylulose-5-phosphate (DXP). The chain is 1-deoxy-D-xylulose-5-phosphate synthase from Stenotrophomonas maltophilia (strain K279a).